We begin with the raw amino-acid sequence, 101 residues long: Urease subunit beta (101 aa).

This sequence belongs to the urease beta subunit family. Heterotrimer of UreA (gamma), UreB (beta) and UreC (alpha) subunits. Three heterotrimers associate to form the active enzyme.

The protein resides in the cytoplasm. It catalyses the reaction urea + 2 H2O + H(+) = hydrogencarbonate + 2 NH4(+). Its pathway is nitrogen metabolism; urea degradation; CO(2) and NH(3) from urea (urease route): step 1/1. The sequence is that of Urease subunit beta from Verminephrobacter eiseniae (strain EF01-2).